A 254-amino-acid polypeptide reads, in one-letter code: CRISPR-associated endonuclease Cas1 (254 aa).

Mn(2+) is bound by residues E78, H146, and E161.

This sequence belongs to the CRISPR-associated endonuclease Cas1 family. In terms of assembly, homodimer, forms a heterotetramer with a Cas2 homodimer. The cofactor is Mg(2+). Mn(2+) serves as cofactor.

Functionally, CRISPR (clustered regularly interspaced short palindromic repeat), is an adaptive immune system that provides protection against mobile genetic elements (viruses, transposable elements and conjugative plasmids). CRISPR clusters contain spacers, sequences complementary to antecedent mobile elements, and target invading nucleic acids. CRISPR clusters are transcribed and processed into CRISPR RNA (crRNA). Acts as a dsDNA endonuclease. Involved in the integration of spacer DNA into the CRISPR cassette. This is CRISPR-associated endonuclease Cas1 from Leptospira interrogans serogroup Icterohaemorrhagiae serovar Lai (strain 56601).